The following is a 170-amino-acid chain: Cathelicidin antimicrobial peptide (170 aa).

A signal peptide spans 1–30; it reads MKTQRDGPSLGRWSLLLLLLGLTMPLAVIG. A propeptide spans 31–131 (cathelin-like domain (CLD)); it reads RVLSYQEAVL…DISCDKDKRK (101 aa). Residues 31-131 form a cathelin-like domain (CLD) region; the sequence is RVLSYQEAVL…DISCDKDKRK (101 aa). 2 cysteine pairs are disulfide-bonded: C86-C97 and C108-C125. Residues 150 to 162 form an active core region; sequence LKKIGQKIKDFFG.

This sequence belongs to the cathelicidin family. Monomer, homodimer or homotrimer (in vitro). Oligomerizes as tetra- or hexamer in solution (in vitro). In terms of processing, proteolytically cleaved by proteinase PRTN3 into antibacterial peptide LL-37. Proteolytically cleaved by cathepsin CTSG and neutrophil elastase ELANE. Resistant to proteolytic degradation in solution, and when bound to both zwitterionic (mimicking mammalian membranes) and negatively charged membranes (mimicking bacterial membranes). Post-translationally, after secretion onto the skin surface, the CAMP gene product is processed by a serine protease-dependent mechanism into multiple novel antimicrobial peptides distinct from and shorter than cathelicidin LL-37. These peptides show enhanced antimicrobial action, acquiring the ability to kill skin pathogens such as S.aureus, E.coli and C.albicans. These peptides have lost the ability to stimulate CXCL8/IL8 release from keratinocytes. The peptides act synergistically, killing bacteria at lower concentrations when present together, and maintain activity at increased salt condition.

Its subcellular location is the secreted. It is found in the vesicle. Its function is as follows. Antimicrobial protein that is an integral component of the innate immune system. Binds to bacterial lipopolysaccharides (LPS). Acts via neutrophil N-formyl peptide receptors to enhance the release of CXCL2. Postsecretory processing generates multiple cathelicidin antimicrobial peptides with various lengths which act as a topical antimicrobial defense in sweat on skin. The unprocessed precursor form, cathelicidin antimicrobial peptide, inhibits the growth of Gram-negative E.coli and E.aerogenes with efficiencies comparable to that of the mature peptide LL-37 (in vitro). Functionally, antimicrobial peptide that is an integral component of the innate immune system. Binds to bacterial lipopolysaccharides (LPS). Causes membrane permeabilization by forming transmembrane pores (in vitro). Causes lysis of E.coli. Exhibits antimicrobial activity against Gram-negative bacteria such as P.aeruginosa, S.typhimurium, E.aerogenes, E.coli and P.syringae, Gram-positive bacteria such as L.monocytogenes, S.epidermidis, S.pyogenes and S.aureus, as well as vancomycin-resistant enterococci (in vitro). Exhibits antimicrobial activity against methicillin-resistant S.aureus, P.mirabilis, and C.albicans in low-salt media, but not in media containing 100 mM NaCl (in vitro). Forms chiral supramolecular assemblies with quinolone signal (PQS) molecules of P.aeruginosa, which may lead to interference of bacterial quorum signaling and perturbance of bacterial biofilm formation. May form supramolecular fiber-like assemblies on bacterial membranes. Induces cytokine and chemokine producation as well as TNF/TNFA and CSF2/GMCSF production in normal human keratinocytes. Exhibits hemolytic activity against red blood cells. In terms of biological role, exhibits antimicrobial activity against E.coli and B.megaterium (in vitro). The chain is Cathelicidin antimicrobial peptide from Saguinus oedipus (Cotton-top tamarin).